Here is a 79-residue protein sequence, read N- to C-terminus: Serine protease inhibitor Kazal-type 1 (79 aa).

A signal peptide spans 1–23 (MKVTGIFLLSALALLSLSGNTGA). The Kazal-like domain maps to 26 to 79 (LGREAKCYNELNGCTKIYDPVCGTDGNTYPNECVLCFENRKRQTSILIQKSGPC). Cystine bridges form between Cys-32/Cys-61, Cys-39/Cys-58, and Cys-47/Cys-79.

It localises to the secreted. Functionally, serine protease inhibitor which exhibits anti-trypsin activity. In the pancreas, protects against trypsin-catalyzed premature activation of zymogens. In terms of biological role, in the male reproductive tract, binds to sperm heads where it modulates sperm capacitance by inhibiting calcium uptake and nitrogen oxide (NO) production. This is Serine protease inhibitor Kazal-type 1 (SPINK1) from Homo sapiens (Human).